Reading from the N-terminus, the 158-residue chain is Transcriptional regulator MraZ (158 aa).

SpoVT-AbrB domains follow at residues 7-66 and 95-138; these read KEQH…EPSV and LDCV…APEK.

It belongs to the MraZ family. Forms oligomers.

The protein resides in the cytoplasm. The protein localises to the nucleoid. The polypeptide is Transcriptional regulator MraZ (Prosthecochloris aestuarii (strain DSM 271 / SK 413)).